The following is a 1344-amino-acid chain: Myb-binding protein 1A (1344 aa).

The interval 1 to 24 (MAEMKSPTKAEPATPAEAAQSDRH) is disordered. Alanine 2 is subject to N-acetylalanine. Residues 2 to 580 (AEMKSPTKAE…WDQMMSTLKE (579 aa)) form an interaction with MYB region. A compositionally biased stretch (low complexity) spans 7-19 (PTKAEPATPAEAA). Lysine 69 and lysine 156 each carry N6-acetyllysine. 2 consecutive short sequence motifs (nuclear export signal) follow at residues 238-256 (SEDN…ANSV) and 261-279 (KLPN…ESRF). Disordered stretches follow at residues 710 to 751 (DEKQ…DKDV) and 1146 to 1344 (QRPK…VQTP). Residues 732-747 (SDMDSEDGEESEEEDR) show a composition bias toward acidic residues. The segment covering 1148-1159 (PKSEKKNAKDIP) has biased composition (basic and acidic residues). Residue lysine 1149 forms a Glycyl lysine isopeptide (Lys-Gly) (interchain with G-Cter in SUMO2) linkage. The segment at 1152–1344 (KKNAKDIPSD…RVASRRVQTP (193 aa)) is required for nuclear and nucleolar localization. Phosphoserine occurs at positions 1160 and 1164. Positions 1168–1185 (TKRKKKGFLPETKKRKKL) are enriched in basic residues. Serine 1187 bears the Phosphoserine mark. Polar residues predominate over residues 1188–1202 (EGTTPEKNAASQQDA). The residue at position 1191 (threonine 1191) is a Phosphothreonine. Phosphoserine occurs at positions 1219 and 1244. Residues 1249–1258 (NPTLSPSTPA) are compositionally biased toward polar residues. Threonine 1251 is modified (phosphothreonine). Serine 1253 carries the post-translational modification Phosphoserine. A phosphothreonine mark is found at threonine 1256 and threonine 1277. Phosphoserine is present on residues serine 1280, serine 1303, and serine 1318. Positions 1317–1329 (LSLVSRSPSLLQS) are enriched in low complexity. Arginine 1322 is modified (citrulline). Serine 1323, serine 1325, and serine 1329 each carry phosphoserine.

This sequence belongs to the MYBBP1A family. In terms of assembly, component of the B-WICH complex, at least composed of SMARCA5/SNF2H, BAZ1B/WSTF, SF3B1, DEK, MYO1C, ERCC6, MYBBP1A and DDX21. Binds to and represses JUN and MYB via the leucine zipper regions present in these proteins. Also binds to and represses PPARGC1A: this interaction is abrogated when PPARGC1A is phosphorylated by MAPK1/ERK. Binds to and stimulates transcription by AHR. Binds to KPNA2. Interacts with CLOCK and CRY1. Citrullinated by PADI4. As to expression, ubiquitously expressed.

Its subcellular location is the nucleus. It localises to the nucleolus. The protein resides in the cytoplasm. Functionally, may activate or repress transcription via interactions with sequence specific DNA-binding proteins. Repression may be mediated at least in part by histone deacetylase activity (HDAC activity). Acts as a corepressor and in concert with CRY1, represses the transcription of the core circadian clock component PER2. Preferentially binds to dimethylated histone H3 'Lys-9' (H3K9me2) on the PER2 promoter. Has a role in rRNA biogenesis together with PWP1. This Mus musculus (Mouse) protein is Myb-binding protein 1A (Mybbp1a).